Reading from the N-terminus, the 241-residue chain is Geranylgeranylglyceryl phosphate synthase (241 aa).

Asp26 and Ser52 together coordinate Mg(2+). Residues 172 to 178, 204 to 205, and 226 to 227 contribute to the sn-glycerol 1-phosphate site; these read YFEAGSG, GG, and GT.

This sequence belongs to the GGGP/HepGP synthase family. Group II subfamily. Mg(2+) is required as a cofactor.

The protein resides in the cytoplasm. The enzyme catalyses sn-glycerol 1-phosphate + (2E,6E,10E)-geranylgeranyl diphosphate = sn-3-O-(geranylgeranyl)glycerol 1-phosphate + diphosphate. It functions in the pathway membrane lipid metabolism; glycerophospholipid metabolism. Functionally, prenyltransferase that catalyzes the transfer of the geranylgeranyl moiety of geranylgeranyl diphosphate (GGPP) to the C3 hydroxyl of sn-glycerol-1-phosphate (G1P). This reaction is the first ether-bond-formation step in the biosynthesis of archaeal membrane lipids. The sequence is that of Geranylgeranylglyceryl phosphate synthase from Hyperthermus butylicus (strain DSM 5456 / JCM 9403 / PLM1-5).